The chain runs to 140 residues: uncharacterized protein (140 aa).

2 helical membrane passes run 4–21 and 26–48; these read ILKF…YLFG and LVKV…SGYL.

Belongs to the bacteriophage holin family. Cp-1 holin subfamily.

It localises to the cell membrane. This is an uncharacterized protein from Listeria monocytogenes serovar 1/2a (strain ATCC BAA-679 / EGD-e).